The following is a 243-amino-acid chain: ATP synthase subunit a (243 aa).

8 consecutive transmembrane segments (helical) span residues 28-48 (SSLYMVLTVVFASLFLFAGVF), 52-72 (VIPGPMQSFVEIVCSFVLGII), 83-103 (YFPLILSVFLYVLFANLVGML), 114-134 (HIVVTLALAMVVFIFVTLIGL), 141-161 (FFAMFLPDGTPNWIAPLMIFL), 177-197 (LTANMIAGHTILKVIAGFVYP), 200-220 (LLISPLSFLFVVVLIVFEVFI), and 221-241 (AMLQAYIFVMLTCVYLNDSLF).

This sequence belongs to the ATPase A chain family. As to quaternary structure, F-type ATPases have 2 components, CF(1) - the catalytic core - and CF(0) - the membrane proton channel. CF(1) has five subunits: alpha(3), beta(3), gamma(1), delta(1), epsilon(1). CF(0) has three main subunits: a(1), b(2) and c(9-12). The alpha and beta chains form an alternating ring which encloses part of the gamma chain. CF(1) is attached to CF(0) by a central stalk formed by the gamma and epsilon chains, while a peripheral stalk is formed by the delta and b chains.

The protein resides in the cell inner membrane. Key component of the proton channel; it plays a direct role in the translocation of protons across the membrane. The protein is ATP synthase subunit a of Neorickettsia sennetsu (strain ATCC VR-367 / Miyayama) (Ehrlichia sennetsu).